A 124-amino-acid polypeptide reads, in one-letter code: Fluoride-specific ion channel FluC (124 aa).

The next 4 helical transmembrane spans lie at 1-21, 38-58, 69-89, and 99-119; these read MVPL…LRFA, TLAV…LFLI, GLMV…LDTV, and LALG…WAGL. The Na(+) site is built by glycine 76 and threonine 79.

It belongs to the fluoride channel Fluc/FEX (TC 1.A.43) family.

It is found in the cell inner membrane. It carries out the reaction fluoride(in) = fluoride(out). With respect to regulation, na(+) is not transported, but it plays an essential structural role and its presence is essential for fluoride channel function. In terms of biological role, fluoride-specific ion channel. Important for reducing fluoride concentration in the cell, thus reducing its toxicity. This Pseudomonas fluorescens (strain Pf0-1) protein is Fluoride-specific ion channel FluC.